We begin with the raw amino-acid sequence, 1407 residues long: DNA-directed RNA polymerase subunit beta' (1407 aa).

Positions 70, 72, 85, and 88 each coordinate Zn(2+). Residues Asp-460, Asp-462, and Asp-464 each contribute to the Mg(2+) site. The Zn(2+) site is built by Cys-814, Cys-888, Cys-895, and Cys-898.

Belongs to the RNA polymerase beta' chain family. The RNAP catalytic core consists of 2 alpha, 1 beta, 1 beta' and 1 omega subunit. When a sigma factor is associated with the core the holoenzyme is formed, which can initiate transcription. Mg(2+) serves as cofactor. Requires Zn(2+) as cofactor.

The catalysed reaction is RNA(n) + a ribonucleoside 5'-triphosphate = RNA(n+1) + diphosphate. DNA-dependent RNA polymerase catalyzes the transcription of DNA into RNA using the four ribonucleoside triphosphates as substrates. This Buchnera aphidicola subsp. Acyrthosiphon pisum (strain APS) (Acyrthosiphon pisum symbiotic bacterium) protein is DNA-directed RNA polymerase subunit beta'.